We begin with the raw amino-acid sequence, 89 residues long: Small ribosomal subunit protein uS14 (89 aa).

The disordered stretch occupies residues 32–51 (DYEGLQKLPKNSSPVRLHNR).

The protein belongs to the universal ribosomal protein uS14 family. In terms of assembly, part of the 30S ribosomal subunit. Contacts proteins S3 and S10.

Its function is as follows. Binds 16S rRNA, required for the assembly of 30S particles and may also be responsible for determining the conformation of the 16S rRNA at the A site. This chain is Small ribosomal subunit protein uS14, found in Christiangramia forsetii (strain DSM 17595 / CGMCC 1.15422 / KT0803) (Gramella forsetii).